The following is a 59-amino-acid chain: Large ribosomal subunit protein bL32 (59 aa).

The protein belongs to the bacterial ribosomal protein bL32 family.

In Lactiplantibacillus plantarum (strain ATCC BAA-793 / NCIMB 8826 / WCFS1) (Lactobacillus plantarum), this protein is Large ribosomal subunit protein bL32.